A 127-amino-acid polypeptide reads, in one-letter code: Small ribosomal subunit protein uS13 (127 aa).

The protein belongs to the universal ribosomal protein uS13 family. In terms of assembly, part of the 30S ribosomal subunit. Forms a loose heterodimer with protein S19. Forms two bridges to the 50S subunit in the 70S ribosome.

Located at the top of the head of the 30S subunit, it contacts several helices of the 16S rRNA. In the 70S ribosome it contacts the 23S rRNA (bridge B1a) and protein L5 of the 50S subunit (bridge B1b), connecting the 2 subunits; these bridges are implicated in subunit movement. Contacts the tRNAs in the A and P-sites. This Roseiflexus sp. (strain RS-1) protein is Small ribosomal subunit protein uS13.